Reading from the N-terminus, the 141-residue chain is Large ribosomal subunit protein uL11 (141 aa).

The protein belongs to the universal ribosomal protein uL11 family. In terms of assembly, part of the ribosomal stalk of the 50S ribosomal subunit. Interacts with L10 and the large rRNA to form the base of the stalk. L10 forms an elongated spine to which L12 dimers bind in a sequential fashion forming a multimeric L10(L12)X complex. In terms of processing, one or more lysine residues are methylated.

Functionally, forms part of the ribosomal stalk which helps the ribosome interact with GTP-bound translation factors. The chain is Large ribosomal subunit protein uL11 from Prochlorococcus marinus (strain NATL1A).